Here is a 383-residue protein sequence, read N- to C-terminus: Acetylornithine deacetylase (383 aa).

Zn(2+) is bound at residue His80. Asp82 is an active-site residue. Residue Asp112 coordinates Zn(2+). Glu144 is an active-site residue. Glu145, Glu169, and His355 together coordinate Zn(2+).

Belongs to the peptidase M20A family. ArgE subfamily. Homodimer. Zn(2+) is required as a cofactor. It depends on Co(2+) as a cofactor. The cofactor is glutathione.

Its subcellular location is the cytoplasm. It catalyses the reaction N(2)-acetyl-L-ornithine + H2O = L-ornithine + acetate. The protein operates within amino-acid biosynthesis; L-arginine biosynthesis; L-ornithine from N(2)-acetyl-L-ornithine (linear): step 1/1. Catalyzes the hydrolysis of the amide bond of N(2)-acetylated L-amino acids. Cleaves the acetyl group from N-acetyl-L-ornithine to form L-ornithine, an intermediate in L-arginine biosynthesis pathway, and a branchpoint in the synthesis of polyamines. The polypeptide is Acetylornithine deacetylase (Shigella dysenteriae serotype 1 (strain Sd197)).